A 446-amino-acid chain; its full sequence is MAAQLNELWQKTINIIKGELTEVSFNTWIKSITPISIDKDSIRLSVPNQFTKEILENRYKDLIINSMKIITTKKYDIAFLISSEEALETDEDQETDTNNVNTDTSSSMLNPKYKFDSFVIGNSNRFAHAACLAVAEAPAKAYNPLFIYGGVGLGKTHLMQAIGHYILDNNPKAKVVYVSSEKFTNELINSIKDDKNVEFRNKYRNVDVLLIDDVQFIAGKERTQEEFFHTFNALHENNKQIILSSDRPPKEIPTLEDRLRSRFEWGLIADIQAPDFETRIAILKKKADVEHLNIPNDVMVYIATQIKSNIRELEGALIRIVAFSSLTNKEISVDLASEALKDIISSKQNKQITIDLIQDVVSSYFNLRIEDFKSARRTKNIAFPRQIAMYLSRKLTDMSLPKIGEAFGGRDHTTVIHAYEKISSALKEDDDLKYTINEITKRFSPK.

The domain I, interacts with DnaA modulators stretch occupies residues 1–73; that stretch reads MAAQLNELWQ…INSMKIITTK (73 aa). The domain II stretch occupies residues 73–107; sequence KKYDIAFLISSEEALETDEDQETDTNNVNTDTSSS. Residues 108–324 are domain III, AAA+ region; that stretch reads MLNPKYKFDS…GALIRIVAFS (217 aa). Gly-152, Gly-154, Lys-155, and Thr-156 together coordinate ATP. Positions 325 to 446 are domain IV, binds dsDNA; the sequence is SLTNKEISVD…NEITKRFSPK (122 aa).

It belongs to the DnaA family. In terms of assembly, oligomerizes as a right-handed, spiral filament on DNA at oriC.

The protein localises to the cytoplasm. Its function is as follows. Plays an essential role in the initiation and regulation of chromosomal replication. ATP-DnaA binds to the origin of replication (oriC) to initiate formation of the DNA replication initiation complex once per cell cycle. Binds the DnaA box (a 9 base pair repeat at the origin) and separates the double-stranded (ds)DNA. Forms a right-handed helical filament on oriC DNA; dsDNA binds to the exterior of the filament while single-stranded (ss)DNA is stabiized in the filament's interior. The ATP-DnaA-oriC complex binds and stabilizes one strand of the AT-rich DNA unwinding element (DUE), permitting loading of DNA polymerase. After initiation quickly degrades to an ADP-DnaA complex that is not apt for DNA replication. Binds acidic phospholipids. This Clostridium acetobutylicum (strain ATCC 824 / DSM 792 / JCM 1419 / IAM 19013 / LMG 5710 / NBRC 13948 / NRRL B-527 / VKM B-1787 / 2291 / W) protein is Chromosomal replication initiator protein DnaA.